The primary structure comprises 359 residues: tRNA/tmRNA (uracil-C(5))-methyltransferase (359 aa).

5 residues coordinate S-adenosyl-L-methionine: Q183, Y211, N216, E232, and D292. C317 acts as the Nucleophile in catalysis. E351 (proton acceptor) is an active-site residue.

This sequence belongs to the class I-like SAM-binding methyltransferase superfamily. RNA M5U methyltransferase family. TrmA subfamily.

It catalyses the reaction uridine(54) in tRNA + S-adenosyl-L-methionine = 5-methyluridine(54) in tRNA + S-adenosyl-L-homocysteine + H(+). The enzyme catalyses uridine(341) in tmRNA + S-adenosyl-L-methionine = 5-methyluridine(341) in tmRNA + S-adenosyl-L-homocysteine + H(+). Dual-specificity methyltransferase that catalyzes the formation of 5-methyluridine at position 54 (m5U54) in all tRNAs, and that of position 341 (m5U341) in tmRNA (transfer-mRNA). The chain is tRNA/tmRNA (uracil-C(5))-methyltransferase from Pseudomonas fluorescens (strain SBW25).